The primary structure comprises 331 residues: Glutaminase-asparaginase (331 aa).

The 330-residue stretch at 2–331 (NNVVIVATGG…KEIQNMFWNY (330 aa)) folds into the Asparaginase/glutaminase domain. The Acyl-ester intermediate role is filled by Thr-12. Substrate contacts are provided by residues Ser-59 and 92-93 (TD).

This sequence belongs to the asparaginase 1 family. As to quaternary structure, homotetramer.

The protein resides in the periplasm. It catalyses the reaction L-glutamine + H2O = L-glutamate + NH4(+). The catalysed reaction is L-asparagine + H2O = L-aspartate + NH4(+). The polypeptide is Glutaminase-asparaginase (ansB) (Acinetobacter glutaminasificans).